A 390-amino-acid polypeptide reads, in one-letter code: MQVFWFIPTHGDSRYLGTSEGARAVGFDYLRQVAVAADTLGYEGVLIPTGRSCEDPWVVASALAAVTQRLKFLVAVRPGLMAPTLAARMAATFDRISNGRLLINLVTGGDRAELEGDGLFLDHAARYEASAEFLRIWRQVLAASHDGDKVDYDGKHLSVKGATVLYPPLQRPHPPVYFGGSSAPAHALAGEQVDTYLTWGEPPAAVAQKLDDVRRHAARHGRTVKFGIRLHVIVRETDAAAWAAAEDLISRLDDDTVARAQAVFANMDSEGQRRMAALHAGGTRRTREALEISPNLWAGVGLVRGGAGTALVGDPATVAERLREYAALGIDTFVLSGYPHLEEAYRFAELVFPLLPRAVRAKFDNLPGKVLSGPFGEVMATGIVPRAAQS.

It belongs to the SsuD family.

The enzyme catalyses an alkanesulfonate + FMNH2 + O2 = an aldehyde + FMN + sulfite + H2O + 2 H(+). Functionally, catalyzes the desulfonation of aliphatic sulfonates. In Cupriavidus taiwanensis (strain DSM 17343 / BCRC 17206 / CCUG 44338 / CIP 107171 / LMG 19424 / R1) (Ralstonia taiwanensis (strain LMG 19424)), this protein is Alkanesulfonate monooxygenase.